We begin with the raw amino-acid sequence, 84 residues long: Large ribosomal subunit protein uL29 (84 aa).

The protein belongs to the universal ribosomal protein uL29 family.

This chain is Large ribosomal subunit protein uL29, found in Mycoplasma mobile (strain ATCC 43663 / 163K / NCTC 11711) (Mesomycoplasma mobile).